A 1612-amino-acid chain; its full sequence is DNA topoisomerase 2-beta (1612 aa).

At A2 the chain carries N-acetylalanine. The residue at position 3 (K3) is an N6-acetyllysine. Residues K21 and K22 each participate in a glycyl lysine isopeptide (Lys-Gly) (interchain with G-Cter in SUMO2) cross-link. Residues N100, N129, and 157–159 each bind ATP; that span reads SSN. Residues K165 and K166 each participate in a glycyl lysine isopeptide (Lys-Gly) (interchain with G-Cter in SUMO2) cross-link. 170–177 contacts ATP; the sequence is GRNGYGAK. Residues K216 and K287 each participate in a glycyl lysine isopeptide (Lys-Gly) (interchain with G-Cter in SUMO2) cross-link. The interval 351-353 is interaction with DNA; sequence KKK. Residues K355 and K361 each participate in a glycyl lysine isopeptide (Lys-Gly) (interchain with G-Cter in SUMO2) cross-link. Residue 385-387 coordinates ATP; that stretch reads QTK. Residues K425, K427, and K434 each participate in a glycyl lysine isopeptide (Lys-Gly) (interchain with G-Cter in SUMO2) cross-link. The region spanning 464 to 581 is the Toprim domain; it reads CTLILTEGDS…SLLKHGFLEE (118 aa). 3 residues coordinate Mg(2+): E470, D550, and D552. Glycyl lysine isopeptide (Lys-Gly) (interchain with G-Cter in SUMO2) cross-links involve residues K588, K593, K623, K631, K634, K664, and K700. In terms of domain architecture, Topo IIA-type catalytic spans 724–1177; the sequence is IPSLVDGFKP…SPSDLWKEDL (454 aa). The active-site O-(5'-phospho-DNA)-tyrosine intermediate is the Y814. The interval 999–1008 is interaction with DNA; it reads KLQTTLTCNS. Residue K1080 forms a Glycyl lysine isopeptide (Lys-Gly) (interchain with G-Cter in SUMO2) linkage. The segment at 1098–1128 is disordered; the sequence is AWKEAQEKAAEEEDTQNQHDDSSSDSGTPSG. Glycyl lysine isopeptide (Lys-Gly) (interchain with G-Cter in SUMO2) cross-links involve residues K1202, K1205, K1214, and K1215. A Phosphoserine modification is found at S1224. Glycyl lysine isopeptide (Lys-Gly) (interchain with G-Cter in SUMO2) cross-links involve residues K1238, K1250, and K1259. The interval 1245-1586 is disordered; the sequence is LLKKKKGDPD…FTSEPPALPR (342 aa). The residue at position 1280 (T1280) is a Phosphothreonine. Glycyl lysine isopeptide (Lys-Gly) (interchain with G-Cter in SUMO2) cross-links involve residues K1311 and K1315. 2 stretches are compositionally biased toward basic and acidic residues: residues 1322-1332 and 1346-1358; these read PWSDDESKSES and SLLR…RPKY. Residues S1324, S1328, S1330, S1332, and S1346 each carry the phosphoserine modification. A Phosphotyrosine modification is found at Y1358. The segment covering 1362–1379 has biased composition (acidic residues); that stretch reads FSEEEEEDADDDDDNNDL. A Phosphoserine modification is found at S1363. A Glycyl lysine isopeptide (Lys-Gly) (interchain with G-Cter in SUMO2) cross-link involves residue K1385. At S1387 the chain carries Phosphoserine. Phosphothreonine is present on T1390. Phosphoserine is present on S1400. Phosphotyrosine is present on Y1408. At S1411 the chain carries Phosphoserine. Residues 1417 to 1429 are compositionally biased toward basic and acidic residues; sequence ATPEKSSHDKKSQ. Residue K1427 forms a Glycyl lysine isopeptide (Lys-Gly) (interchain with G-Cter in SUMO2) linkage. Phosphoserine is present on residues S1428, S1439, and S1441. A Glycyl lysine isopeptide (Lys-Gly) (interchain with G-Cter in SUMO2) cross-link involves residue K1443. Residues 1443-1453 show a composition bias toward basic and acidic residues; the sequence is KSEDDSAKFDS. A phosphoserine mark is found at S1448, S1453, and S1460. K1477 is covalently cross-linked (Glycyl lysine isopeptide (Lys-Gly) (interchain with G-Cter in SUMO2)). Residues 1493–1499 are interaction with PLSCR1; the sequence is KAKRAPK. A phosphoserine mark is found at S1509, S1511, and S1513. A compositionally biased stretch (basic residues) spans 1526–1536; the sequence is GKGRGAKKRKA. A phosphoserine mark is found at S1537 and S1539. Over residues 1550 to 1561 the composition is skewed to basic residues; it reads KPSKTASKKPKK. Residue T1562 is modified to Phosphothreonine. Phosphoserine is present on residues S1563 and S1568. A Phosphotyrosine modification is found at Y1596. S1600 bears the Phosphoserine mark.

Belongs to the type II topoisomerase family. Homodimer. Interacts with PLSCR1 and KIAA1210. Mg(2+) is required as a cofactor. It depends on Mn(2+) as a cofactor. The cofactor is Ca(2+).

Its subcellular location is the nucleus. It is found in the nucleolus. It localises to the nucleoplasm. It catalyses the reaction ATP-dependent breakage, passage and rejoining of double-stranded DNA.. In terms of biological role, key decatenating enzyme that alters DNA topology by binding to two double-stranded DNA molecules, generating a double-stranded break in one of the strands, passing the intact strand through the broken strand, and religating the broken strand. This chain is DNA topoisomerase 2-beta (TOP2B), found in Cricetulus longicaudatus (Long-tailed dwarf hamster).